We begin with the raw amino-acid sequence, 240 residues long: Endonuclease NBR9 (240 aa).

The disordered stretch occupies residues 1 to 24 (MKGTGGVVVGTQNPVRDYNHSTDE). The Smr domain maps to 97–173 (IDLHGLYVKE…NSGVLVLELQ (77 aa)). Residues 181-219 (GPAVNAPTNQYNAQPHPQYNNNGGQPQGQAQNYNNSGND) form a disordered region. Positions 194 to 215 (QPHPQYNNNGGQPQGQAQNYNN) are enriched in low complexity.

It is found in the cytoplasm. Endonuclease involved in nonstop mRNA decay via the formation of mRNA cleavage fragments in the vicinity of stalled ribosomes. In Saccharomyces cerevisiae (strain ATCC 204508 / S288c) (Baker's yeast), this protein is Endonuclease NBR9.